The primary structure comprises 418 residues: Serine hydroxymethyltransferase (418 aa).

(6S)-5,6,7,8-tetrahydrofolate is bound by residues leucine 121 and 125-127; that span reads GHL. Lysine 230 is modified (N6-(pyridoxal phosphate)lysine). 355–357 contacts (6S)-5,6,7,8-tetrahydrofolate; it reads SPF.

It belongs to the SHMT family. As to quaternary structure, homodimer. The cofactor is pyridoxal 5'-phosphate.

It localises to the cytoplasm. The enzyme catalyses (6R)-5,10-methylene-5,6,7,8-tetrahydrofolate + glycine + H2O = (6S)-5,6,7,8-tetrahydrofolate + L-serine. It functions in the pathway one-carbon metabolism; tetrahydrofolate interconversion. It participates in amino-acid biosynthesis; glycine biosynthesis; glycine from L-serine: step 1/1. Catalyzes the reversible interconversion of serine and glycine with tetrahydrofolate (THF) serving as the one-carbon carrier. This reaction serves as the major source of one-carbon groups required for the biosynthesis of purines, thymidylate, methionine, and other important biomolecules. Also exhibits THF-independent aldolase activity toward beta-hydroxyamino acids, producing glycine and aldehydes, via a retro-aldol mechanism. This Streptococcus pyogenes serotype M1 protein is Serine hydroxymethyltransferase.